We begin with the raw amino-acid sequence, 101 residues long: ATP-dependent Clp protease adapter protein ClpS 1 (101 aa).

The protein belongs to the ClpS family. Binds to the N-terminal domain of the chaperone ClpA.

Involved in the modulation of the specificity of the ClpAP-mediated ATP-dependent protein degradation. The sequence is that of ATP-dependent Clp protease adapter protein ClpS 1 from Bradyrhizobium diazoefficiens (strain JCM 10833 / BCRC 13528 / IAM 13628 / NBRC 14792 / USDA 110).